The primary structure comprises 421 residues: MTTQFSVSGIELELLRYPSRQESNLQAWDAADEHLIKHLIDTEQTNINTAIINDNFGALTAGLLSIDPSWALTLETDAKTSLLGTTQNLSRNQLPTDTLTWVNSCDELPQGFELVLMKLPKNLNYFSHQLNRLSHVLPAGTRVLIGAKAKSINKSLLETIEKNLGAASASLTWKKTRVITCISDGKVRPLPKATTWSVPEFKLQITNLSNVFAANKLDIGARIMLDNMPKGDFKSIVDLGCGNGILGLHAKQVFPEAYIHFIDDSEMAVASARENWALNKLDNPALVGEQATFGWDDCLTHMSEGFRPDLILCNPPFHQGEAITDHIAWQMFLDAFRRLKNGGILHVVGNRHLAYHVKLQRIFKNCTTVASNGKFVILQAQKISKKALEPELEQESDLNSKLDANTEVPHPQSALYGKPKA.

The segment at 389 to 421 (EPELEQESDLNSKLDANTEVPHPQSALYGKPKA) is disordered.

This sequence belongs to the methyltransferase superfamily. RlmG family.

The protein localises to the cytoplasm. It catalyses the reaction guanosine(1835) in 23S rRNA + S-adenosyl-L-methionine = N(2)-methylguanosine(1835) in 23S rRNA + S-adenosyl-L-homocysteine + H(+). Functionally, specifically methylates the guanine in position 1835 (m2G1835) of 23S rRNA. In Shewanella halifaxensis (strain HAW-EB4), this protein is Ribosomal RNA large subunit methyltransferase G.